Reading from the N-terminus, the 420-residue chain is 3-isopropylmalate dehydratase large subunit (420 aa).

[4Fe-4S] cluster-binding residues include Cys-300, Cys-360, and Cys-363.

The protein belongs to the aconitase/IPM isomerase family. LeuC type 2 subfamily. Heterodimer of LeuC and LeuD. Requires [4Fe-4S] cluster as cofactor.

It carries out the reaction (2R,3S)-3-isopropylmalate = (2S)-2-isopropylmalate. The protein operates within amino-acid biosynthesis; L-leucine biosynthesis; L-leucine from 3-methyl-2-oxobutanoate: step 2/4. Catalyzes the isomerization between 2-isopropylmalate and 3-isopropylmalate, via the formation of 2-isopropylmaleate. This is 3-isopropylmalate dehydratase large subunit from Helicobacter hepaticus (strain ATCC 51449 / 3B1).